We begin with the raw amino-acid sequence, 701 residues long: MEEGSSTARAVVRSTCGFTVGLSLATAFGLLELLGEGHSPFGCLVTTVTLAAFLSLGMGFSRQVRVSVLLLLPQAFSKQSRLLLLVASFGLVLQGPCANTLQNFTRASEAVACGAELALNQTAEMLERAKQPLISALSKIKAIAQKAKVVGDRIRKFFRSIIDAVKHIARCLQNVWYWLLHIGDMCNSELGNPYSKCTQVFDDAKIHCMKVVSGFPHLCYALLPYKLLVCGLASLVQKFCVLPSYLEFFLRTVIRTPVMKLLGKLRREFEFNMTATHYFSVDLNSSRSLSQVALDLQEAVSMKLYTAREALSLMGYTMPLLIGFLYIQALCYRYYYLNSDKFDNVYITRRFLDMEAVRSLAGMPTVLPLSSHEAKHYIQPDSMFLSQREQMFYTLEIFNLTRHLLIMLLLVFLDYGVFWLLDLARYHLQGEIVARSPVVVSISVEGSGYSGNIYRDLASAFDVMQQGNVSVLSPRCTLHPSEPDAKGYIVIGTMYGLCFFVTLFGSYVSRLRRAICASYYPSREQERITYLYNMLLSHRTNITATVQRAVRRRSADQGQMNILQVLAIRLPFLRPLLGPFSLQQSYCMGCGEPEDKGGMENFVSCSTPGCRGLYCPTCFRLLNNTCSVCSAPLSNQGHLDLELDSSDEESPQLWLAAARRKAPEQELKLRQQLQEALGTNLSDKSTSKPERAGNRNQDRKQ.

4 helical membrane passes run 15–35, 40–60, 82–102, and 215–235; these read TCGF…ELLG, PFGC…GMGF, LLLL…NTLQ, and FPHL…LASL. 2 N-linked (GlcNAc...) asparagine glycosylation sites follow: Asn-272 and Asn-284. 2 helical membrane-spanning segments follow: residues 310 to 330 and 404 to 424; these read ALSL…IQAL and LLIM…LDLA. Asn-468 carries an N-linked (GlcNAc...) asparagine glycan. Residues 488-508 traverse the membrane as a helical segment; that stretch reads YIVIGTMYGLCFFVTLFGSYV. Residues 673-701 form a disordered region; sequence LQEALGTNLSDKSTSKPERAGNRNQDRKQ. Positions 685–701 are enriched in basic and acidic residues; sequence STSKPERAGNRNQDRKQ.

In terms of assembly, interacts with DCST1. In terms of tissue distribution, expressed in testis.

The protein localises to the cytoplasmic vesicle. The protein resides in the secretory vesicle. It is found in the acrosome membrane. Functionally, essential sperm cell-surface protein required for sperm-egg fusion and fertilization. In Mus musculus (Mouse), this protein is DC-STAMP domain-containing protein 2.